The chain runs to 518 residues: Probable carboxypeptidase 2 (518 aa).

An N-terminal signal peptide occupies residues 1–21; it reads MVAYHLLTLISLGLGSHCASA. The N-linked (GlcNAc...) asparagine glycan is linked to Asn-46. The interval 53–76 is disordered; it reads PAFTSPGTVPRGFSDGTSGPTRDE. Residues 71 to 351 enclose the Peptidase M14 domain; it reads GPTRDETMEG…VMAKSILQTA (281 aa). N-linked (GlcNAc...) asparagine glycosylation is present at Asn-116. Residues His-136, Glu-139, and His-224 each coordinate Zn(2+). Glu-322 (proton donor/acceptor) is an active-site residue. Residues Asn-393 and Asn-459 are each glycosylated (N-linked (GlcNAc...) asparagine).

The protein belongs to the peptidase M14 family. Zn(2+) is required as a cofactor.

The protein resides in the secreted. In terms of biological role, extracellular metalloprotease that contributes to pathogenicity. In Trichophyton verrucosum (strain HKI 0517), this protein is Probable carboxypeptidase 2 (MCPB).